We begin with the raw amino-acid sequence, 416 residues long: Cotranscriptional regulator ARB2A (416 aa).

A signal peptide spans 1-18 (MSISLSSLILLPIWINMA). A disordered region spans residues 208-247 (KPKIHVQSSSDSSDEPAEKRERKDKVSKETKKRRDFYEKY). Over residues 223–236 (PAEKRERKDKVSKE) the composition is skewed to basic and acidic residues. Ser-293 functions as the Nucleophile in the catalytic mechanism. A Prevents secretion from ER motif is present at residues 413–416 (HEEL).

This sequence belongs to the ARB2A family. As to quaternary structure, interacts with AGO2. Found in a complex, composed of AGO2, CHD7 and ARB2A.

The protein resides in the nucleus. It is found in the cytoplasm. It localises to the endoplasmic reticulum. Its function is as follows. Plays a role in the regulation of alternative splicing, by interacting with AGO2 and CHD7. Seems to be required for stabilizing protein-protein interactions at the chromatin-spliceosome interface. May have hydrolase activity. In Homo sapiens (Human), this protein is Cotranscriptional regulator ARB2A.